The primary structure comprises 356 residues: Alternative oxidase, mitochondrial (356 aa).

Residues 152–172 (VIRFIFLETVAGVPGMVGGML) form a helical membrane-spanning segment. Positions 159, 198, and 201 each coordinate Fe cation. Residues 217-237 (LMVLGAQGVFFNGFFISYLIS) traverse the membrane as a helical segment. Residues Glu-249, Glu-304, and His-307 each contribute to the Fe cation site. The segment at 330–356 (YDNPEAPHPTKSAEIVKPTGWERDEVI) is disordered.

It belongs to the alternative oxidase family. The cofactor is Fe cation.

The protein resides in the mitochondrion inner membrane. Catalyzes cyanide-resistant oxygen consumption. May increase respiration when the cytochrome respiratory pathway is restricted, or in response to low temperatures. The chain is Alternative oxidase, mitochondrial (AOX1) from Ajellomyces capsulatus (Darling's disease fungus).